Consider the following 600-residue polypeptide: Oligopeptide-binding protein OppA (600 aa).

An N-terminal signal peptide occupies residues 1 to 22 (MNKLKVTLLASSVVLAATLLSA). Cysteine 23 carries the N-palmitoyl cysteine lipid modification. Residue cysteine 23 is the site of S-diacylglycerol cysteine attachment.

Belongs to the bacterial solute-binding protein 5 family. As to quaternary structure, the complex is composed of two ATP-binding proteins (OppD and OppF), two transmembrane proteins (OppB and OppC) and a solute-binding protein (OppA).

It localises to the cell membrane. In terms of biological role, part of the ABC transporter complex OppABCDF involved in the uptake of oligopeptides. Essential for uptake of peptides larger than three amino acids and for growth in milk. The protein is Oligopeptide-binding protein OppA of Lactococcus lactis subsp. lactis (Streptococcus lactis).